Consider the following 467-residue polypeptide: MSDDTTQIEPAMAQETSPRANTRKVFVKTYGCQMNVYDSQRMADSLAAEGYVATDTPDDADLVLLNTCHIREKASEKLYSALGRLRKMKDARAADGKELTIGVAGCVAQAEGQEILRRAPNVDLVIGPQTYHRLPNALARVRGGEKVVETDYAIEDKFEHLPAPRREETRKRGVSAFLTVQEGCDKFCTFCVVPYTRGSEVSRSVKQIVAEAERLADSGVRELTLLGQNVNAWHGEGEDGREWGLGELLFRLARIPGIAHLRYTTSHPRDMDDSLIAAHRDLRQLMPYLHLPVQSGSDRILKAMNRRHKADEYLRLIERIRNVRPDMALSGDFIVGFPGETDQDFEDTMQLVRDVNYAQAYSFKYSPRPGTPGADLDDHVEEAVKDERLQRLQALLSAQQYAFQDSMIGRKMDVLLEKPGREAGQMVGRSPWLLPVIIDDNKDRVGDIIHVKIVSTGTNSLIAQKLA.

The interval methionine 1 to alanine 20 is disordered. Residues arginine 23–glycine 143 enclose the MTTase N-terminal domain. [4Fe-4S] cluster contacts are provided by cysteine 32, cysteine 68, cysteine 106, cysteine 184, cysteine 188, and cysteine 191. One can recognise a Radical SAM core domain in the interval arginine 170–alanine 402. The TRAM domain occupies aspartate 405–alanine 467.

It belongs to the methylthiotransferase family. MiaB subfamily. Monomer. [4Fe-4S] cluster serves as cofactor.

It is found in the cytoplasm. The enzyme catalyses N(6)-dimethylallyladenosine(37) in tRNA + (sulfur carrier)-SH + AH2 + 2 S-adenosyl-L-methionine = 2-methylsulfanyl-N(6)-dimethylallyladenosine(37) in tRNA + (sulfur carrier)-H + 5'-deoxyadenosine + L-methionine + A + S-adenosyl-L-homocysteine + 2 H(+). In terms of biological role, catalyzes the methylthiolation of N6-(dimethylallyl)adenosine (i(6)A), leading to the formation of 2-methylthio-N6-(dimethylallyl)adenosine (ms(2)i(6)A) at position 37 in tRNAs that read codons beginning with uridine. This Brucella melitensis biotype 1 (strain ATCC 23456 / CCUG 17765 / NCTC 10094 / 16M) protein is tRNA-2-methylthio-N(6)-dimethylallyladenosine synthase.